The following is a 360-amino-acid chain: NADH-quinone oxidoreductase subunit H (360 aa).

Helical transmembrane passes span 22–42, 97–117, 130–150, 170–190, 208–228, 255–275, 292–312, and 336–356; these read ITVG…IPLI, ALFY…WAVI, IGLL…IIAG, ISYE…SGSM, VFSW…ISAV, GFAF…IAAL, WGFI…AVLY, and VLIP…ISPL.

The protein belongs to the complex I subunit 1 family. As to quaternary structure, NDH-1 is composed of 14 different subunits. Subunits NuoA, H, J, K, L, M, N constitute the membrane sector of the complex.

It is found in the cell inner membrane. The catalysed reaction is a quinone + NADH + 5 H(+)(in) = a quinol + NAD(+) + 4 H(+)(out). In terms of biological role, NDH-1 shuttles electrons from NADH, via FMN and iron-sulfur (Fe-S) centers, to quinones in the respiratory chain. The immediate electron acceptor for the enzyme in this species is believed to be ubiquinone. Couples the redox reaction to proton translocation (for every two electrons transferred, four hydrogen ions are translocated across the cytoplasmic membrane), and thus conserves the redox energy in a proton gradient. This subunit may bind ubiquinone. The polypeptide is NADH-quinone oxidoreductase subunit H (Neisseria meningitidis serogroup C / serotype 2a (strain ATCC 700532 / DSM 15464 / FAM18)).